Consider the following 371-residue polypeptide: 4-hydroxy-3-methylbut-2-en-1-yl diphosphate synthase (flavodoxin) (371 aa).

4 residues coordinate [4Fe-4S] cluster: Cys270, Cys273, Cys305, and Glu312.

This sequence belongs to the IspG family. It depends on [4Fe-4S] cluster as a cofactor.

The catalysed reaction is (2E)-4-hydroxy-3-methylbut-2-enyl diphosphate + oxidized [flavodoxin] + H2O + 2 H(+) = 2-C-methyl-D-erythritol 2,4-cyclic diphosphate + reduced [flavodoxin]. The protein operates within isoprenoid biosynthesis; isopentenyl diphosphate biosynthesis via DXP pathway; isopentenyl diphosphate from 1-deoxy-D-xylulose 5-phosphate: step 5/6. In terms of biological role, converts 2C-methyl-D-erythritol 2,4-cyclodiphosphate (ME-2,4cPP) into 1-hydroxy-2-methyl-2-(E)-butenyl 4-diphosphate. The chain is 4-hydroxy-3-methylbut-2-en-1-yl diphosphate synthase (flavodoxin) from Shewanella baltica (strain OS223).